The sequence spans 412 residues: 2-methylacyl-CoA dehydrogenase, mitochondrial (412 aa).

Residues 1-25 constitute a mitochondrion transit peptide; that stretch reads MHKLFAVRSLSSAIVKSFKSLQNQQ. FAD contacts are provided by residues 154-163 and 187-189; these read LAMSEPNAGS and WCT. Ser163 is a substrate binding site. Substrate-binding positions include 209-210, Tyr264, and 271-274; these read SK and DLER. The Proton acceptor role is filled by Glu273. Residues Arg299, Gln310, and 367-371 each bind FAD; that span reads QCLGG. 394–395 lines the substrate pocket; that stretch reads AG. Position 396–398 (396–398) interacts with FAD; sequence TSE.

It belongs to the acyl-CoA dehydrogenase family. Homotetramer. Requires FAD as cofactor. Expressed in flowers.

It is found in the mitochondrion. The catalysed reaction is 2-methylbutanoyl-CoA + oxidized [electron-transfer flavoprotein] + H(+) = (2E)-2-methylbut-2-enoyl-CoA + reduced [electron-transfer flavoprotein]. In terms of biological role, short/branched-chain acyl-CoA dehydrogenase (SBCAD). Uses 2-methylbutanoyl-CoA as substrate. Minor activity with the straight-chain substrates, butanoyl-CoA, valeryl-CoA, hexanoyl-CoA, and octanoyl-CoA but no activity with isovaleryl-CoA. The polypeptide is 2-methylacyl-CoA dehydrogenase, mitochondrial (2MBCD) (Solanum tuberosum (Potato)).